The following is a 124-amino-acid chain: Fluoride-specific ion channel FluC (124 aa).

3 consecutive transmembrane segments (helical) span residues 20–40, 60–80, and 102–122; these read LLSI…TLLV, ISPE…TTFS, and VLLN…LIFS. Na(+) is bound by residues glycine 74 and threonine 77.

It belongs to the fluoride channel Fluc/FEX (TC 1.A.43) family.

The protein localises to the cell inner membrane. It carries out the reaction fluoride(in) = fluoride(out). Its activity is regulated as follows. Na(+) is not transported, but it plays an essential structural role and its presence is essential for fluoride channel function. Its function is as follows. Fluoride-specific ion channel. Important for reducing fluoride concentration in the cell, thus reducing its toxicity. This is Fluoride-specific ion channel FluC from Shewanella frigidimarina (strain NCIMB 400).